The primary structure comprises 256 residues: Imidazole glycerol phosphate synthase subunit HisF (256 aa).

Catalysis depends on residues Asp11 and Asp130.

It belongs to the HisA/HisF family. As to quaternary structure, heterodimer of HisH and HisF.

Its subcellular location is the cytoplasm. The enzyme catalyses 5-[(5-phospho-1-deoxy-D-ribulos-1-ylimino)methylamino]-1-(5-phospho-beta-D-ribosyl)imidazole-4-carboxamide + L-glutamine = D-erythro-1-(imidazol-4-yl)glycerol 3-phosphate + 5-amino-1-(5-phospho-beta-D-ribosyl)imidazole-4-carboxamide + L-glutamate + H(+). It participates in amino-acid biosynthesis; L-histidine biosynthesis; L-histidine from 5-phospho-alpha-D-ribose 1-diphosphate: step 5/9. IGPS catalyzes the conversion of PRFAR and glutamine to IGP, AICAR and glutamate. The HisF subunit catalyzes the cyclization activity that produces IGP and AICAR from PRFAR using the ammonia provided by the HisH subunit. The sequence is that of Imidazole glycerol phosphate synthase subunit HisF from Prochlorococcus marinus (strain MIT 9301).